The primary structure comprises 101 residues: Large ribosomal subunit protein eL21 (101 aa).

Basic residues predominate over residues 1–18 (MVKHSKGYRTRSRSLLRK). A disordered region spans residues 1-24 (MVKHSKGYRTRSRSLLRKSPRERG).

It belongs to the eukaryotic ribosomal protein eL21 family.

The sequence is that of Large ribosomal subunit protein eL21 (rpl21e) from Saccharolobus solfataricus (strain ATCC 35092 / DSM 1617 / JCM 11322 / P2) (Sulfolobus solfataricus).